Reading from the N-terminus, the 241-residue chain is Uridylate kinase (241 aa).

ATP is bound at residue 15–18; it reads KMSG. Gly-57 lines the UMP pocket. The ATP site is built by Gly-58 and Arg-62. Residues Asp-77 and 138 to 145 each bind UMP; that span reads TGNPFFTT. Residues Thr-165, Tyr-171, and Asp-174 each coordinate ATP.

The protein belongs to the UMP kinase family. As to quaternary structure, homohexamer.

The protein localises to the cytoplasm. The enzyme catalyses UMP + ATP = UDP + ADP. Its pathway is pyrimidine metabolism; CTP biosynthesis via de novo pathway; UDP from UMP (UMPK route): step 1/1. Inhibited by UTP. Its function is as follows. Catalyzes the reversible phosphorylation of UMP to UDP. In Dichelobacter nodosus (strain VCS1703A), this protein is Uridylate kinase.